Here is a 425-residue protein sequence, read N- to C-terminus: Proteinase-activated receptor 1 (425 aa).

An N-terminal signal peptide occupies residues 1-21 (MGPRRLLLVAACLCLCGPLLS). The propeptide at 22–41 (ARTRARRPASKATNATLDPR) is removed for receptor activation. Asparagine 35, asparagine 62, and asparagine 75 each carry an N-linked (GlcNAc...) asparagine glycan. The Extracellular segment spans residues 42-102 (SFLLRNPNDK…SGYLTSSWLT (61 aa)). The chain crosses the membrane as a helical span at residues 103–128 (LFVPSVYTGVFVVSLPVNIMAIVVFI). At 129-137 (LKMKVKKPA) the chain is on the cytoplasmic side. The chain crosses the membrane as a helical span at residues 138 to 157 (VVYMLHLATADVLFVSVLPF). Residues 158 to 176 (KISYYLSGSDWQFGSELCR) lie on the Extracellular side of the membrane. Residues cysteine 175 and cysteine 254 are joined by a disulfide bond. A helical transmembrane segment spans residues 177–198 (FVTAAFYCNMYASILLMTVISI). The Cytoplasmic segment spans residues 199–218 (DRFLAVVYPMQSLSWRTLGR). The helical transmembrane segment at 219 to 239 (ASFTCLAIWALAIAGVVPLLL) threads the bilayer. Residues 240 to 268 (KEQTIQVPGLNITTCHDVLNETLLEGYYA) are Extracellular-facing. N-linked (GlcNAc...) asparagine glycans are attached at residues asparagine 250 and asparagine 259. Residues 269–288 (YYFSAFSAVFFFVPLIISTV) traverse the membrane as a helical segment. Topologically, residues 289 to 311 (CYVSIIRCLSSSTVANRSKKSRA) are cytoplasmic. Residues 312 to 334 (LFLSAAVFCIFIICFGPTNILLI) form a helical membrane-spanning segment. Over 335 to 350 (AHYSFLSHTSTTEAAY) the chain is Extracellular. The helical transmembrane segment at 351-374 (FAYLLCVCVSSISCCIDPLIYYYA) threads the bilayer. Topologically, residues 375-425 (SSECQRYVYSILCCKESSDPSSSNSSGQLMASKMDTCSSNLNNSIYKKLLT) are cytoplasmic. Phosphoserine is present on serine 418.

This sequence belongs to the G-protein coupled receptor 1 family. Proteolytic cleavage by thrombin generates a new N-terminus that functions as a tethered ligand. Also proteolytically cleaved by cathepsin CTSG. Cleavage at 41-Arg-|-Ser-42 by CTSG results in receptor activation while cleavage at 55-Phe-|-Trp-56 results in inhibition of receptor activation. Post-translationally, phosphorylated in the C-terminal tail; probably mediating desensitization prior to the uncoupling and internalization of the receptor.

Its subcellular location is the cell membrane. High affinity receptor that binds the activated thrombin, leading to calcium release from intracellular stores. The thrombin-activated receptor signaling pathway is mediated through PTX-insensitive G proteins, activation of phospholipase C resulting in the production of 1D-myo-inositol 1,4,5-trisphosphate (InsP3) which binds to InsP3 receptors causing calcium release from the stores. In astrocytes, the calcium released into the cytosol allows the Ca(2+)-dependent release of L-glutamate into the synaptic cleft through BEST1, that targets the neuronal postsynaptic GRIN2A/NMDAR receptor resulting in the synaptic plasticity regulation. May play a role in platelets activation and in vascular development. Mediates up-regulation of pro-inflammatory cytokines, such as MCP-1/CCL2 and IL6, triggered by coagulation factor Xa (F10) in cardiac fibroblasts and umbilical vein endothelial cells. This chain is Proteinase-activated receptor 1, found in Papio hamadryas (Hamadryas baboon).